Here is a 131-residue protein sequence, read N- to C-terminus: Antitoxin MqsA (131 aa).

Cys-3, Cys-6, Cys-37, and Cys-40 together coordinate Zn(2+). The HTH cro/C1-type domain occupies 74–127 (IVKVRKKLSLTQKEASEIFGGGVNAFSRYEKGNAQPHPSTIKLLRVLDKHPELL). The H-T-H motif DNA-binding region spans 85 to 104 (QKEASEIFGGGVNAFSRYEK).

In terms of assembly, homodimer. Crystallizes as a heterotetramer with MqsA, MqsR-MqsA(2)-MqsR. Purifies as a probable heterohexamer of 2 MqsR dimers and 1 MqsA dimer. Binds promoter DNA as a dimer. When the 2 dissociate the MsqR mRNA interferase becomes active. Zn(2+) serves as cofactor. Degraded in the presence of oxidative stress, maybe by the Lon and/or ClpX proteases.

Antitoxin component of a type II toxin-antitoxin (TA) system. Labile antitoxin that binds to the MqsR mRNA interferase toxin and neutralizes its endoribonuclease activity. Overexpression prevents MqsR-mediated cessation of cell growth and inhibition of cell proliferation. Initially reported to act as a cotranscription factor with MqsA. Following further experiments, the MqsR-MqsA complex does not bind DNA and all reported data are actually due to a small fraction of free MqsA alone binding DNA. Addition of MqsR to a preformed MqsA-promoter DNA complex causes dissociation of the MqsA-DNA complex, probably causing derepression of MqsA-repressed transcripts. MqsA binds to 2 palindromes in the promoter region of the mqsRA operon activating its transcription. Binds to other promoters, inducing mcbR and spy and repressing cspD among others. Binds to and represses the rpoS promoter, the master stress regulator, resulting in decreased cyclic-di-GMP, reduced stress resistance, increased cell motility and decreased biofilm formation; in these experiments 5 TA systems are missing (lacks MazEF, RelEB, ChpB, YoeB-YefM, YafQ-DinJ). An earlier study showed overexpression alone increases biofilm formation, perhaps by repressing cspD; in these experiments the 5 TA systems are present. Represses the csgD promoter. In the presence of stress, when this protein is degraded, the promoters it represses are derepressed, leading to biofilm formation. This TA system mediates cell growth during bile acid deoxycholate stress by degrading mRNA for probable deoxycholate-binding protein YgiS; bile acid detergents such as deoxycholate are important for host defense against bacterial growth in the gall bladder and duodenum. In Escherichia coli (strain K12), this protein is Antitoxin MqsA.